The primary structure comprises 199 residues: Histone deacetylase complex subunit SAP25 (199 aa).

Composition is skewed to polar residues over residues 151 to 163 and 184 to 199; these read QMSQ…SSSA and QGAD…THCP. Residues 151-199 form a disordered region; the sequence is QMSQGEPRPSSSAVGPPDHTSDPPSPCGSPSSSQGADLSLPQTPDTHCP.

May be a component of the mSIN3A corepressor complex. Interacts with SIN3A. Interacts with HDAC2.

The protein resides in the nucleus. The protein localises to the cytoplasm. In terms of biological role, involved in the transcriptional repression mediated by the mSIN3A but not the N-CoR corepressor complex. The chain is Histone deacetylase complex subunit SAP25 (SAP25) from Homo sapiens (Human).